We begin with the raw amino-acid sequence, 483 residues long: E3 ubiquitin-protein ligase TRIM50 (483 aa).

Residues 16 to 57 (CPICLEVFKEPLMLQCGHSYCKDCLDNLSQHLDSELCCPVCR) form an RING-type zinc finger. Residues 84-125 (IEPTVCVHHRNPLSLFCEKDQEFICGLCGLLGSHQHHRVTPV) form a B box-type zinc finger. Zn(2+) contacts are provided by Cys-89, His-92, Cys-111, and His-117. Coiled-coil stretches lie at residues 127–169 (TVYS…NESD) and 203–236 (GLVA…GNES). Positions 275 to 474 (DIKLTVWKRL…LPMVLPPPSG (200 aa)) constitute a B30.2/SPRY domain. The residue at position 372 (Lys-372) is an N6-acetyllysine.

Belongs to the TRIM/RBCC family. In terms of assembly, can form dimers and trimers. Interacts with several E2 ubiquitin-conjugating enzymes, including UBE2L6, UBE2E1, UBE2E3. No interaction with UBE2H. Interacts with BECN1. Interacts with SQSTM1. Interacts with NLRP3. Post-translationally, auto-ubiquitinated. Acetylated by EP300 and KAT2B. HDAC6 drives TRIM50 deacetylation. Acetylation antagonizes with TRIM50 ubiquitination. Expressed in the stomach.

It is found in the cytoplasm. The enzyme catalyses S-ubiquitinyl-[E2 ubiquitin-conjugating enzyme]-L-cysteine + [acceptor protein]-L-lysine = [E2 ubiquitin-conjugating enzyme]-L-cysteine + N(6)-ubiquitinyl-[acceptor protein]-L-lysine.. E3 ubiquitin-protein ligase that ubiquitinates Beclin-1/BECN1 in a 'Lys-63'-dependent manner enhancing its binding to ULK1. In turn, promotes starvation-induced autophagy activation. Also interacts with p62/SQSTM1 protein and thereby induces the formation and the autophagy clearance of aggresome-associated polyubiquitinated proteins through HDAC6 interaction. Also promotes NLRP3 inflammasome activation by directly inducing NLRP3 oligomerization independent of its E3 ligase function. The sequence is that of E3 ubiquitin-protein ligase TRIM50 (Trim50) from Mus musculus (Mouse).